Here is a 229-residue protein sequence, read N- to C-terminus: Cytochrome c oxidase assembly factor 7 (229 aa).

5 Sel1-like repeats span residues 34–66, 68–104, 108–145, 146–182, and 183–218; these read PEGCHRLADYLEGVKKNYESTAQVLQHNCEVNA, AQSCYKLGAYHVTGKGGMKKCLKTAYSCFLKSCNTQG, VDACHNVGLLAQDGRALETGPDTTVARQYFEKACEGGF, APSCFNLSTLYIQGFPGLDKSMPLALKYALKACDLGH, and VWGCANASRMYKLGDGTDKDEQRAEELKNRAKDLHG. Residues 197–229 form a disordered region; that stretch reads DGTDKDEQRAEELKNRAKDLHGQEKERQLKFGE.

The protein belongs to the hcp beta-lactamase family.

The protein localises to the mitochondrion intermembrane space. In terms of biological role, may be required for assembly of mitochondrial respiratory chain complexes. The protein is Cytochrome c oxidase assembly factor 7 (coa7) of Danio rerio (Zebrafish).